A 206-amino-acid chain; its full sequence is Superoxide dismutase [Mn] (206 aa).

Histidine 27, histidine 82, aspartate 168, and histidine 172 together coordinate Mn(2+).

This sequence belongs to the iron/manganese superoxide dismutase family. Homodimer. Mn(2+) is required as a cofactor.

The enzyme catalyses 2 superoxide + 2 H(+) = H2O2 + O2. In terms of biological role, destroys superoxide anion radicals which are normally produced within the cells and which are toxic to biological systems. The chain is Superoxide dismutase [Mn] (sodA) from Escherichia coli (strain K12).